A 151-amino-acid polypeptide reads, in one-letter code: Decarboxylase nsrE (151 aa).

One can recognise an EthD domain in the interval 31 to 126 (AGMTEEDYHN…VGDHENFADT (96 aa)).

It belongs to the tpcK family.

It catalyses the reaction atrochrysone carboxylate + H(+) = atrochrysone + CO2. The protein operates within secondary metabolite biosynthesis. In terms of biological role, decarboxylase; part of the gene cluster that mediates the biosynthesis of the tetrahydroxanthone dimer neosartorin, which exhibits antibacterial activity. The two different monomeric units appear to be synthesized by the same set of enzymes, among which the Baeyer-Villiger monooxygenase nsrF is the key enzyme for the divergence of the biosynthetic routes. The pathway begins with the synthesis of atrochrysone thioester by the polyketide synthase nsrB. The atrochrysone carboxyl ACP thioesterase nsrC then breaks the thioester bond and releases the atrochrysone carboxylic acid from AacuL. Atrochrysone carboxylic acid is decarboxylated by the decarboxylase nsrE, and oxidized by the anthrone oxygenase nsrD to yield emodin. Emodin is then reduced to emodin hydroquinone by the oxidoreductase nsrR. A-ring reduction by the short chain dehydrogenase nsrJ, dehydration by the scytalone dehydratase-like protein nsrI and probable spontaneous re-oxidation, results in overall deoxygenation to chrysophanol. The Baeyer-Villiger monooxygenase nsrF accepts chrysophanol as a substrate to insert one oxygen atom at two different positions to yield the precursors of both monomric units. NsrF is promiscuous/flexible in interacting with the 2 (non methylated and methylated) aromatic rings of chrysophanol, thus diverging the biosynthetic pathway at this point. After the hydrolysis of the lactones, methylesterification by the methyltransferase nsrG yields respectively moniliphenone and 2,2',6'-trihydroxy-4-methyl-6-methoxya-cyldiphenylmethanone. The next steps are the hydroxylation by the FAD-dependent monooxygenase nsrK, followed by isomerization by the monooxygenase nsrQ. The short chain dehydrogenase/reductase nsrO then catalyzes the C-5 ketoreduction to give the xanthone skeleton of blennolide C and 5-acetylblennolide A. The acetyltransferase nsrL has a strict substrate specificity and uses only blennolide A but not blennolide C to yield 5-acetylblennolide A as the single-acetylated product. In the final step of the biosynthesis, the heterodimerization of the 2 xanthones, blennolide C and 5-acetylblennolide A, is catalyzed by the cytochrome P450 monooxygenase nsrP. NsrP can utilize at least three different xanthones as its substrates to perform the dimerization reaction. In Aspergillus novofumigatus (strain IBT 16806), this protein is Decarboxylase nsrE.